We begin with the raw amino-acid sequence, 591 residues long: Probable methyltransferase PMT6 (591 aa).

The Cytoplasmic portion of the chain corresponds to 1 to 13; it reads MRGSVIGAERSGQ. A helical; Signal-anchor for type II membrane protein transmembrane segment spans residues 14–34; the sequence is TIMVALVLMVGSFYTGSLFGT. The Lumenal portion of the chain corresponds to 35–591; the sequence is NQPIYVSHPS…FCRKRFWAII (557 aa). Residues N87, N99, N146, N193, N323, N436, N473, and N515 are each glycosylated (N-linked (GlcNAc...) asparagine).

This sequence belongs to the methyltransferase superfamily.

Its subcellular location is the endoplasmic reticulum membrane. This Arabidopsis thaliana (Mouse-ear cress) protein is Probable methyltransferase PMT6.